The following is a 172-amino-acid chain: Adenine phosphoribosyltransferase (172 aa).

This sequence belongs to the purine/pyrimidine phosphoribosyltransferase family. Homodimer.

Its subcellular location is the cytoplasm. It catalyses the reaction AMP + diphosphate = 5-phospho-alpha-D-ribose 1-diphosphate + adenine. It participates in purine metabolism; AMP biosynthesis via salvage pathway; AMP from adenine: step 1/1. In terms of biological role, catalyzes a salvage reaction resulting in the formation of AMP, that is energically less costly than de novo synthesis. The chain is Adenine phosphoribosyltransferase from Prochlorococcus marinus (strain MIT 9313).